A 43-amino-acid polypeptide reads, in one-letter code: METAALVAISISRLLVSFTGYALYTAFGQPSEQLRDPFEEHED.

A helical membrane pass occupies residues Ala-5–Phe-27.

It belongs to the PsbN family.

Its subcellular location is the plastid. It localises to the chloroplast thylakoid membrane. Functionally, may play a role in photosystem I and II biogenesis. The protein is Protein PsbN of Bowenia serrulata (Byfield fern).